Reading from the N-terminus, the 165-residue chain is Small ribosomal subunit protein uS5 (165 aa).

Positions 10-73 (LKEKVVFINR…EDAKKNLVEV (64 aa)) constitute an S5 DRBM domain.

Belongs to the universal ribosomal protein uS5 family. As to quaternary structure, part of the 30S ribosomal subunit. Contacts proteins S4 and S8.

Functionally, with S4 and S12 plays an important role in translational accuracy. Located at the back of the 30S subunit body where it stabilizes the conformation of the head with respect to the body. The protein is Small ribosomal subunit protein uS5 of Clostridium acetobutylicum (strain ATCC 824 / DSM 792 / JCM 1419 / IAM 19013 / LMG 5710 / NBRC 13948 / NRRL B-527 / VKM B-1787 / 2291 / W).